The primary structure comprises 142 residues: MFIGEYQHALDPKNRIIVPAKLRDGLGNKFVITKGLDGCLYAYPLDEWRILEDKLKTLPLTNKDARSFVRFFFSGACEVELDKQGRGLIPQNLKEYAGIEKDIVSIGVLSRVEIWSKEKWSEYNESNIDFDSIAEKMNDLGI.

2 SpoVT-AbrB domains span residues 5–47 and 76–119; these read EYQH…PLDE and ACEV…SKEK.

This sequence belongs to the MraZ family. As to quaternary structure, forms oligomers.

Its subcellular location is the cytoplasm. It localises to the nucleoid. This is Transcriptional regulator MraZ from Clostridium beijerinckii (strain ATCC 51743 / NCIMB 8052) (Clostridium acetobutylicum).